Reading from the N-terminus, the 81-residue chain is Small ribosomal subunit protein bS16 (81 aa).

It belongs to the bacterial ribosomal protein bS16 family.

In Clostridium perfringens (strain ATCC 13124 / DSM 756 / JCM 1290 / NCIMB 6125 / NCTC 8237 / Type A), this protein is Small ribosomal subunit protein bS16.